The following is a 275-amino-acid chain: COP9 signalosome complex subunit 7a (275 aa).

The residue at position 2 (S2) is an N-acetylserine. The PCI domain occupies 2 to 159; it reads SAEVKVTGQN…QRLEVDYSIG (158 aa). A coiled-coil region spans residues 185–233; it reads LSGIEEQVSRANQHKEQQLGLKQQIESEVANLKKTIKVTTAAAAAATSQ. A disordered region spans residues 227-275; that stretch reads AAAATSQDPEQHLTELREPAPGTNQRQPSKKASKGKGLRGSAKIWSKSN. Residues 235 to 244 show a composition bias toward basic and acidic residues; sequence PEQHLTELRE. The segment covering 254–263 has biased composition (basic residues); that stretch reads PSKKASKGKG.

Belongs to the CSN7/EIF3M family. CSN7 subfamily. Component of the CSN complex, composed of COPS1/GPS1, COPS2, COPS3, COPS4, COPS5, COPS6, COPS7 (COPS7A or COPS7B), COPS8 and COPS9. In the complex, it probably interacts directly with COPS1, COPS2, COPS4, COPS5, COPS6 and COPS8. Interacts with PMF1. Interacts with the translation initiation factor EIF3S6. Interacts with CK2 and PKD. Interacts directly with ID3. Phosphorylated by CK2 and PKD kinases.

It is found in the cytoplasm. It localises to the nucleus. Functionally, component of the COP9 signalosome complex (CSN), a complex involved in various cellular and developmental processes. The CSN complex is an essential regulator of the ubiquitin (Ubl) conjugation pathway by mediating the deneddylation of the cullin subunits of SCF-type E3 ligase complexes, leading to decrease the Ubl ligase activity of SCF-type complexes such as SCF, CSA or DDB2. The complex is also involved in phosphorylation of p53/TP53, JUN, I-kappa-B-alpha/NFKBIA, ITPK1 and IRF8/ICSBP, possibly via its association with CK2 and PKD kinases. CSN-dependent phosphorylation of TP53 and JUN promotes and protects degradation by the Ubl system, respectively. The protein is COP9 signalosome complex subunit 7a (COPS7A) of Pongo abelii (Sumatran orangutan).